The primary structure comprises 160 residues: Eukaryotic translation initiation factor 5A-2 (160 aa).

A compositionally biased stretch (basic and acidic residues) spans 1–12 (MSDEEHHFESKA). The disordered stretch occupies residues 1–21 (MSDEEHHFESKADAGASKTFP). Residue Lys-52 is modified to Hypusine.

It belongs to the eIF-5A family. Post-translationally, lys-52 undergoes hypusination, a unique post-translational modification that consists in the addition of a butylamino group from spermidine to lysine side chain, leading to the formation of the unusual amino acid hypusine. eIF-5As are the only known proteins to undergo this modification, which is essential for their function.

Functionally, translation factor that promotes translation elongation and termination, particularly upon ribosome stalling at specific amino acid sequence contexts. Binds between the exit (E) and peptidyl (P) site of the ribosome and promotes rescue of stalled ribosome: specifically required for efficient translation of polyproline-containing peptides as well as other motifs that stall the ribosome. Acts as a ribosome quality control (RQC) cofactor by joining the RQC complex to facilitate peptidyl transfer during CAT tailing step. The polypeptide is Eukaryotic translation initiation factor 5A-2 (Solanum lycopersicum (Tomato)).